Reading from the N-terminus, the 142-residue chain is Large-conductance mechanosensitive channel (142 aa).

A run of 3 helical transmembrane segments spans residues 15–35, 38–58, and 82–102; these read AFVMRGNVVDLAVGVIIGAAF, IVTSLVNDIFMPIIGMIIGNI, and GMFIQEIVNFLIIALCVFVAI.

It belongs to the MscL family. Homopentamer.

Its subcellular location is the cell inner membrane. Functionally, channel that opens in response to stretch forces in the membrane lipid bilayer. May participate in the regulation of osmotic pressure changes within the cell. The protein is Large-conductance mechanosensitive channel of Fusobacterium nucleatum subsp. nucleatum (strain ATCC 25586 / DSM 15643 / BCRC 10681 / CIP 101130 / JCM 8532 / KCTC 2640 / LMG 13131 / VPI 4355).